Reading from the N-terminus, the 289-residue chain is Enoyl-CoA delta isomerase 1, mitochondrial (289 aa).

The N-terminal 28 residues, Met1 to Arg28, are a transit peptide targeting the mitochondrion. N6-acetyllysine; alternate is present on Lys48. At Lys48 the chain carries N6-succinyllysine; alternate. Lys71 carries the post-translational modification N6-succinyllysine. Lys76 bears the N6-acetyllysine mark. Substrate-binding positions include Ala93–Leu97, Gly140, and Asn164. N6-acetyllysine; alternate occurs at positions 222, 229, 255, and 270. 4 positions are modified to N6-succinyllysine; alternate: Lys222, Lys229, Lys255, and Lys270. N6-succinyllysine is present on Lys275. Lys283 is subject to N6-acetyllysine; alternate. Position 283 is an N6-succinyllysine; alternate (Lys283).

It belongs to the enoyl-CoA hydratase/isomerase family. Homotrimer.

It localises to the mitochondrion matrix. It carries out the reaction a (3Z)-enoyl-CoA = a 4-saturated (2E)-enoyl-CoA. The enzyme catalyses a (3E)-enoyl-CoA = a 4-saturated (2E)-enoyl-CoA. The catalysed reaction is (3Z)-octenoyl-CoA = (2E)-octenoyl-CoA. It catalyses the reaction (2E)-tetradecenoyl-CoA = (3Z)-tetradecenoyl-CoA. It carries out the reaction (3Z)-dodecenoyl-CoA = (2E)-dodecenoyl-CoA. The enzyme catalyses (3Z)-hexenoyl-CoA = (2E)-hexenoyl-CoA. The catalysed reaction is (3Z)-decenoyl-CoA = (2E)-decenoyl-CoA. It participates in lipid metabolism; fatty acid beta-oxidation. In terms of biological role, key enzyme of fatty acid beta-oxidation. Able to isomerize both 3-cis (3Z) and 3-trans (3E) double bonds into the 2-trans (2E) form in a range of enoyl-CoA species, with a preference for (3Z)-enoyl-CoAs over (3E)-enoyl-CoAs. The catalytic efficiency of this enzyme is not affected by the fatty acyl chain length. The polypeptide is Enoyl-CoA delta isomerase 1, mitochondrial (Mus musculus (Mouse)).